A 398-amino-acid polypeptide reads, in one-letter code: Beta-1,6-galactosyltransferase GALT29A (398 aa).

The Cytoplasmic segment spans residues 1–6 (MKRSVR). The helical; Signal-anchor for type II membrane protein transmembrane segment at 7-27 (PLFSALLFAFFAATLICRVAI) threads the bilayer. Topologically, residues 28–398 (RRSSFSFASA…FKIPLVQVYH (371 aa)) are lumenal. Residues asparagine 221 and asparagine 346 are each glycosylated (N-linked (GlcNAc...) asparagine).

The protein belongs to the glycosyltransferase 29 family. Interacts with GALT31A.

The protein resides in the golgi apparatus membrane. Functionally, galactosyltransferase involved in the biosynthesis of type II arabinogalactan. Possesses galactosyltransferase (GalT) activity in vitro, transferring galactose from UDP-galactose to a mixture of various oligosaccharides derived from arabinogalactan proteins. Forms a complex with GALT31A that can work cooperatively to enhance the activities of adding galactose residues at O6 positions to beta-1,6-galactan and beta-1,3-galactan. This Arabidopsis thaliana (Mouse-ear cress) protein is Beta-1,6-galactosyltransferase GALT29A.